A 51-amino-acid chain; its full sequence is UPF0181 protein VVA0806 (51 aa).

It belongs to the UPF0181 family.

This is UPF0181 protein VVA0806 from Vibrio vulnificus (strain YJ016).